The following is an 847-amino-acid chain: Mitogen-activated protein kinase kinase kinase 11 (847 aa).

S11 carries the post-translational modification Phosphoserine. Residues S11–A38 are disordered. Over residues N17 to P32 the composition is skewed to gly residues. Residue S35 is modified to Phosphoserine. The SH3 domain occupies Y41–G105. Positions L117–L379 constitute a Protein kinase domain. Residues I123–V131 and K144 each bind ATP. D241 (proton acceptor) is an active-site residue. T277 is subject to Phosphothreonine; by autocatalysis. The residue at position 281 (S281) is a Phosphoserine; by autocatalysis and MAP4K1. S394 is subject to Phosphoserine. Leucine-zipper regions lie at residues I403 to L424 and L438 to L459. A phosphoserine mark is found at S507, S524, S548, S555, and S556. The disordered stretch occupies residues P537 to R643. Residues R550–A562 show a composition bias toward basic and acidic residues. Positions S597–L609 are enriched in low complexity. A phosphoserine mark is found at S654, S693, and S705. The disordered stretch occupies residues L655–P847. Positions T676–P694 are enriched in pro residues. T708 is subject to Phosphothreonine. Phosphoserine occurs at positions 724, 727, 740, 748, 758, 770, 789, 793, and 815. The segment covering P760–R773 has biased composition (low complexity). Positions R787–R799 are enriched in pro residues. The span at R800 to P816 shows a compositional bias: low complexity.

Belongs to the protein kinase superfamily. STE Ser/Thr protein kinase family. MAP kinase kinase kinase subfamily. Homodimer; undergoes dimerization during activation. Interacts with MAP2K4/MKK4. Interacts with MAP2K7/MKK7. Found in a complex with SH3RF1, RAC1, MAP2K7/MKK7, MAPK8IP1/JIP1 and MAPK8/JNK1. The cofactor is Mg(2+). Post-translationally, autophosphorylation on serine and threonine residues within the activation loop plays a role in enzyme activation. Thr-277 is likely to be the main autophosphorylation site. Phosphorylation of Ser-555 and Ser-556 is induced by CDC42. In terms of tissue distribution, expressed in a wide variety of normal and neoplastic tissues including fetal lung, liver, heart and kidney, and adult lung, liver, heart, kidney, placenta, skeletal muscle, pancreas and brain.

It is found in the cytoplasm. Its subcellular location is the cytoskeleton. The protein localises to the microtubule organizing center. The protein resides in the centrosome. It catalyses the reaction L-seryl-[protein] + ATP = O-phospho-L-seryl-[protein] + ADP + H(+). It carries out the reaction L-threonyl-[protein] + ATP = O-phospho-L-threonyl-[protein] + ADP + H(+). Its activity is regulated as follows. Homodimerization via the leucine zipper domains is required for autophosphorylation and subsequent activation. Its function is as follows. Activates the JUN N-terminal pathway. Required for serum-stimulated cell proliferation and for mitogen and cytokine activation of MAPK14 (p38), MAPK3 (ERK) and MAPK8 (JNK1) through phosphorylation and activation of MAP2K4/MKK4 and MAP2K7/MKK7. Plays a role in mitogen-stimulated phosphorylation and activation of BRAF, but does not phosphorylate BRAF directly. Influences microtubule organization during the cell cycle. The protein is Mitogen-activated protein kinase kinase kinase 11 of Homo sapiens (Human).